Here is a 218-residue protein sequence, read N- to C-terminus: Ribonuclease HII (218 aa).

Residues 22-211 (VRIAGVDEAG…VRAALESRFS (190 aa)) enclose the RNase H type-2 domain. Asp28, Glu29, and Asp119 together coordinate a divalent metal cation.

It belongs to the RNase HII family. The cofactor is Mn(2+). Mg(2+) serves as cofactor.

It is found in the cytoplasm. The catalysed reaction is Endonucleolytic cleavage to 5'-phosphomonoester.. Endonuclease that specifically degrades the RNA of RNA-DNA hybrids. The polypeptide is Ribonuclease HII (Maricaulis maris (strain MCS10) (Caulobacter maris)).